Reading from the N-terminus, the 299-residue chain is Bifunctional protein FolD 2 (299 aa).

Residues 168–170, serine 193, and isoleucine 234 each bind NADP(+); that span reads GRS.

It belongs to the tetrahydrofolate dehydrogenase/cyclohydrolase family. Homodimer.

It carries out the reaction (6R)-5,10-methylene-5,6,7,8-tetrahydrofolate + NADP(+) = (6R)-5,10-methenyltetrahydrofolate + NADPH. The catalysed reaction is (6R)-5,10-methenyltetrahydrofolate + H2O = (6R)-10-formyltetrahydrofolate + H(+). It functions in the pathway one-carbon metabolism; tetrahydrofolate interconversion. Its function is as follows. Catalyzes the oxidation of 5,10-methylenetetrahydrofolate to 5,10-methenyltetrahydrofolate and then the hydrolysis of 5,10-methenyltetrahydrofolate to 10-formyltetrahydrofolate. The sequence is that of Bifunctional protein FolD 2 from Rhizobium etli (strain ATCC 51251 / DSM 11541 / JCM 21823 / NBRC 15573 / CFN 42).